The chain runs to 254 residues: Thiamine thiazole synthase (254 aa).

Residues S36, 55 to 56, G63, V127, and 154 to 156 contribute to the NAD(+) site; these read EK and HVD. D156 and H171 together coordinate Fe cation. M219 provides a ligand contact to NAD(+). Residue R229 participates in glycine binding.

It belongs to the THI4 family. In terms of assembly, homooctamer; tetramer of dimers. Fe(2+) serves as cofactor.

It carries out the reaction hydrogen sulfide + glycine + NAD(+) = ADP-5-ethyl-4-methylthiazole-2-carboxylate + nicotinamide + 3 H2O + H(+). It participates in cofactor biosynthesis; thiamine diphosphate biosynthesis. In terms of biological role, involved in the biosynthesis of the thiazole moiety of thiamine. Catalyzes the conversion of NAD and glycine to adenosine diphosphate 5-(2-hydroxyethyl)-4-methylthiazole-2-carboxylate (ADT), an adenylated thiazole intermediate, using free sulfide as a source of sulfur. This is Thiamine thiazole synthase from Methanoculleus marisnigri (strain ATCC 35101 / DSM 1498 / JR1).